The chain runs to 1254 residues: Structural polyprotein (1254 aa).

Positions 1–33 (MFPFQPMYPMQPMPYRNPFAAPRRPWFPRTDPF) are necessary for nucleocapsid assembly and virus assembly. The segment at 33–68 (FLAMQVQELTRSMANLTFKQRRDAPPEGPSAKKPKK) is host transcription inhibition. The Supraphysiological nuclear export signal signature appears at 41-48 (LTRSMANL). The tract at residues 45–119 (MANLTFKQRR…KKPGKRQRMV (75 aa)) is disordered. A Nuclear localization signal motif is present at residues 64-68 (KKPKK). The span at 80 to 92 (GKKKKNQGKKKAK) shows a compositional bias: basic residues. The tract at residues 91–127 (AKTGPPNPKAQNGNKKKTNKKPGKRQRMVMKLESDKT) is binding to the viral RNA. Thr93 and Thr108 each carry phosphothreonine. Positions 104–118 (NKKKTNKKPGKRQRM) are enriched in basic residues. The segment at 112-126 (PGKRQRMVMKLESDK) is ribosome-binding. Residue Ser124 is modified to Phosphoserine. The Peptidase S3 domain occupies 126–275 (KTFPIMLEGK…KYTPENCEQW (150 aa)). Thr127 carries the phosphothreonine modification. Catalysis depends on charge relay system residues His152, Asp174, and Ser226. Positions 276–287 (SLVTTMCLLANV) are functions as an uncleaved signal peptide for the precursor of protein E3/E2. Over 276–701 (SLVTTMCLLA…HYYHRYPMST (426 aa)) the chain is Extracellular. Asn286, Asn546, and Asn652 each carry an N-linked (GlcNAc...) asparagine; by host glycan. A helical transmembrane segment spans residues 702-722 (ILGLSICAAIATVSVAASTWL). The Cytoplasmic portion of the chain corresponds to 723–757 (FCRSRVACLTPYRLTPNARIPFCLAVLCCARTARA). Residues Cys730, Cys750, and Cys751 are each lipidated (S-palmitoyl cysteine; by host). Residues 730 to 750 (CLTPYRLTPNARIPFCLAVLC) form a transient transmembrane before p62-6K protein processing region. The Extracellular segment spans residues 758–772 (ETTWESLDHLWNNNQ). Residues 773–793 (QMFWIQLLIPLAALIVVTRLL) form a helical membrane-spanning segment. The Cytoplasmic segment spans residues 794-795 (RC). The chain crosses the membrane as a helical span at residues 796-816 (VCCVVPFLVMAGAAAGAYEHA). Residues 817-1224 (TTMPSQAGIS…SKTAWTWLTS (408 aa)) are Extracellular-facing. Cystine bridges form between Cys861-Cys926, Cys874-Cys906, Cys875-Cys908, and Cys880-Cys890. The tract at residues 896 to 913 (VYPFMWGGAYCFCDTENT) is E1 fusion peptide loop. The N-linked (GlcNAc...) asparagine; by host glycan is linked to Asn946. Intrachain disulfides connect Cys1071/Cys1083, Cys1113/Cys1188, Cys1118/Cys1192, and Cys1140/Cys1182. A helical membrane pass occupies residues 1225–1245 (LLGGSAVIIIIGLVLATIVAM). Over 1246 to 1254 (YVLTNQKHN) the chain is Cytoplasmic.

As to quaternary structure, homodimer. Homomultimer. Interacts with host karyopherin KPNA4; this interaction allows the nuclear import of the viral capsid protein. Interacts with spike glycoprotein E2. Interacts with host IRAK1; the interaction leads to inhibition of IRAK1-dependent signaling. Part of a tetrameric complex composed of host CRM1, host importin alpha/beta dimer and the viral capsid; this complex blocks the receptor-mediated transport through the nuclear pore. Interacts with host phosphatase PPP1CA; this interaction dephosphorylates the capsid protein, which increases its ability to bind to the viral genome. In terms of assembly, the precursor of protein E3/E2 and E1 form a heterodimer shortly after synthesis. Interacts with spike glycoprotein E2. The precursor of protein E3/E2 and E1 form a heterodimer shortly after synthesis. Processing of the precursor of protein E3/E2 into E2 and E3 results in a heterodimer of the spike glycoproteins E2 and E1. Spike at virion surface are constituted of three E2-E1 heterodimers. After target cell attachment and endocytosis, E1 change conformation to form homotrimers. Interacts with 6K protein. Interacts with host LDLRAD3; this interaction mediates viral entry to the host cell. As to quaternary structure, interacts with spike glycoprotein E1. Processing of the precursor of protein E3/E2 into E2 and E3 results in a heterodimer of the spike glycoproteins E2 and E1. Spike at virion surface are constituted of a trimer of E2-E1 heterodimers. Interacts with 6K protein. Interacts with host LDLRAD3; this interaction mediates viral entry to the host cell. In terms of assembly, oligomer. Interacts with spike glycoprotein E1. Interacts with spike glycoprotein E2. Post-translationally, structural polyprotein: Specific enzymatic cleavages in vivo yield mature proteins. Capsid protein is auto-cleaved during polyprotein translation, unmasking a signal peptide at the N-terminus of the precursor of E3/E2. The remaining polyprotein is then targeted to the host endoplasmic reticulum, where host signal peptidase cleaves it into pE2, 6K and E1 proteins. pE2 is further processed to mature E3 and E2 by host furin in trans-Golgi vesicle. In terms of processing, palmitoylated via thioester bonds. These palmitoylations may induce disruption of the C-terminus transmembrane. This would result in the reorientation of E2 C-terminus from lumenal to cytoplasmic side. Phosphorylated on serine and threonine residues. Post-translationally, N-glycosylated. In terms of processing, palmitoylated via thioester bonds.

It is found in the virion. The protein resides in the host cytoplasm. The protein localises to the host cell membrane. It localises to the host nucleus. Its subcellular location is the virion membrane. It catalyses the reaction Autocatalytic release of the core protein from the N-terminus of the togavirus structural polyprotein by hydrolysis of a -Trp-|-Ser- bond.. In terms of biological role, forms an icosahedral capsid with a T=4 symmetry composed of 240 copies of the capsid protein surrounded by a lipid membrane through which penetrate 80 spikes composed of trimers of E1-E2 heterodimers. The capsid protein binds to the viral RNA genome at a site adjacent to a ribosome binding site for viral genome translation following genome release. Possesses a protease activity that results in its autocatalytic cleavage from the nascent structural protein. Following its self-cleavage, the capsid protein transiently associates with ribosomes, and within several minutes the protein binds to viral RNA and rapidly assembles into icosahedric core particles. The resulting nucleocapsid eventually associates with the cytoplasmic domain of the spike glycoprotein E2 at the cell membrane, leading to budding and formation of mature virions. In case of infection, new virions attach to target cells and after clathrin-mediated endocytosis their membrane fuses with the host endosomal membrane. This leads to the release of the nucleocapsid into the cytoplasm, followed by an uncoating event necessary for the genomic RNA to become accessible. The uncoating might be triggered by the interaction of capsid proteins with ribosomes. Binding of ribosomes would release the genomic RNA since the same region is genomic RNA-binding and ribosome-binding. Specifically inhibits interleukin-1 receptor-associated kinase 1/IRAK1-dependent signaling during viral entry, representing a means by which the alphaviruses may evade innate immune detection and activation prior to viral gene expression. Inhibits host transcription. Forms a tetrameric complex with XPO1/CRM1 and the nuclear import receptor importin. This complex blocks the central channel of host nuclear pores thereby inhibiting the receptor-mediated nuclear transport and thus the host mRNA and rRNA transcription. The inhibition of transcription is linked to a cytopathic effect on the host cell. Functionally, provides the signal sequence for the translocation of the precursor of protein E3/E2 to the host endoplasmic reticulum. Furin-cleaved E3 remains associated with spike glycoprotein E1 and mediates pH protection of the latter during the transport via the secretory pathway. After virion release from the host cell, the assembly protein E3 is gradually released in the extracellular space. Plays a role in viral attachment to target host cell, by binding to the cell receptor LDLRAD3. Synthesized as a p62 precursor which is processed by furin at the cell membrane just before virion budding, giving rise to E2-E1 heterodimer. The p62-E1 heterodimer is stable, whereas E2-E1 is unstable and dissociate at low pH. p62 is processed at the last step, presumably to avoid E1 fusion activation before its final export to cell surface. E2 C-terminus contains a transitory transmembrane that would be disrupted by palmitoylation, resulting in reorientation of the C-terminal tail from lumenal to cytoplasmic side. This step is critical since E2 C-terminus is involved in budding by interacting with capsid proteins. This release of E2 C-terminus in cytoplasm occurs lately in protein export, and precludes premature assembly of particles at the endoplasmic reticulum membrane. Its function is as follows. Acts as a viroporin that participates in virus glycoprotein processing and transport to the plasma membrane, cell permeabilization and budding of viral particles. Disrupts the calcium homeostasis of the cell, probably at the endoplasmic reticulum level. This leads to cytoplasmic calcium elevation. Because of its lipophilic properties, the 6K protein is postulated to influence the selection of lipids that interact with the transmembrane domains of the glycoproteins, which, in turn, affects the deformability of the bilayer required for the extreme curvature that occurs as budding proceeds. Present in low amount in virions, about 3% compared to viral glycoproteins. In terms of biological role, class II viral fusion protein. Fusion activity is inactive as long as E1 is bound to E2 in mature virion. After virus attachment to cell receptor LDLRAD3 and endocytosis, acidification of the endosome would induce dissociation of E1/E2 heterodimer and concomitant trimerization of the E1 subunits. This E1 trimer is fusion active, and promotes release of viral nucleocapsid in cytoplasm after endosome and viral membrane fusion. Efficient fusion requires the presence of cholesterol and sphingolipid in the target membrane. Fusion is optimal at levels of about 1 molecule of cholesterol per 2 molecules of phospholipids, and is specific for sterols containing a 3-beta-hydroxyl group. This is Structural polyprotein from Bos taurus (Bovine).